The chain runs to 422 residues: D-amino acid dehydrogenase (422 aa).

3-17 (VVVIGAGVVGTASAW) provides a ligand contact to FAD.

The protein belongs to the DadA oxidoreductase family. FAD serves as cofactor.

The enzyme catalyses a D-alpha-amino acid + A + H2O = a 2-oxocarboxylate + AH2 + NH4(+). The protein operates within amino-acid degradation; D-alanine degradation; NH(3) and pyruvate from D-alanine: step 1/1. In terms of biological role, oxidative deamination of D-amino acids. The chain is D-amino acid dehydrogenase from Paramagnetospirillum magneticum (strain ATCC 700264 / AMB-1) (Magnetospirillum magneticum).